We begin with the raw amino-acid sequence, 417 residues long: Voltage-gated ClC-type chloride channel ClcB (417 aa).

The next 11 membrane-spanning stretches (helical) occupy residues 5–25 (LLIATIIGILAALAVAGFRHA), 54–74 (LITPAVGGLAAGALLWGWQKM), 146–166 (LWIACGAAAGMASAYHAPLAG), 168–188 (LFIAEILFGTLMLASLGPVVI), 190–210 (AVVALLTTHLLSGGNALLYTV), 222–242 (AMIISTGLVAGVCGPLFMWLM), 258–278 (WQLALGGFIVGLLSLLTPAVW), 288–308 (FLLSPPLLSVIAGIFICKLLA), 316–336 (GAPGGVFTPTLFIGLSIGMLY), 339–359 (MWGFWLPGADEMAILLGLTGM), and 380–400 (MTGEYRLLPGLLIACVVASVL).

Belongs to the chloride channel (TC 2.A.49) family. ClcB subfamily.

The protein resides in the cell inner membrane. In terms of biological role, probably acts as an electrical shunt for an outwardly-directed proton pump that is linked to amino acid decarboxylation, as part of the extreme acid resistance (XAR) response. This chain is Voltage-gated ClC-type chloride channel ClcB, found in Citrobacter koseri (strain ATCC BAA-895 / CDC 4225-83 / SGSC4696).